Consider the following 258-residue polypeptide: Regulatory protein RecX (258 aa).

Belongs to the RecX family.

The protein resides in the cytoplasm. Functionally, modulates RecA activity. This Streptococcus uberis (strain ATCC BAA-854 / 0140J) protein is Regulatory protein RecX.